A 147-amino-acid polypeptide reads, in one-letter code: Globin, major monomeric component (147 aa).

The Globin domain maps to 1–146 (GLSAAQRQVI…ISGALISGLQ (146 aa)). A heme b-binding site is contributed by H90.

The protein belongs to the globin family. In terms of assembly, monomer.

The chain is Globin, major monomeric component from Glycera dibranchiata (Bloodworm).